Here is a 114-residue protein sequence, read N- to C-terminus: Aspartate 1-decarboxylase (114 aa).

S25 (schiff-base intermediate with substrate; via pyruvic acid) is an active-site residue. S25 is subject to Pyruvic acid (Ser). Position 57 (T57) interacts with substrate. Y58 serves as the catalytic Proton donor. Residue 71 to 73 coordinates substrate; the sequence is GAA.

Belongs to the PanD family. In terms of assembly, heterooctamer of four alpha and four beta subunits. It depends on pyruvate as a cofactor. In terms of processing, is synthesized initially as an inactive proenzyme, which is activated by self-cleavage at a specific serine bond to produce a beta-subunit with a hydroxyl group at its C-terminus and an alpha-subunit with a pyruvoyl group at its N-terminus.

It localises to the cytoplasm. It carries out the reaction L-aspartate + H(+) = beta-alanine + CO2. The protein operates within cofactor biosynthesis; (R)-pantothenate biosynthesis; beta-alanine from L-aspartate: step 1/1. Functionally, catalyzes the pyruvoyl-dependent decarboxylation of aspartate to produce beta-alanine. The polypeptide is Aspartate 1-decarboxylase (Campylobacter hominis (strain ATCC BAA-381 / DSM 21671 / CCUG 45161 / LMG 19568 / NCTC 13146 / CH001A)).